The chain runs to 256 residues: Ribonuclease HII (256 aa).

One can recognise an RNase H type-2 domain in the interval 72–256 (ALICGIDEVG…SFEPIKSMMK (185 aa)). The a divalent metal cation site is built by Asp-78, Glu-79, and Asp-170.

The protein belongs to the RNase HII family. Mn(2+) is required as a cofactor. The cofactor is Mg(2+).

It is found in the cytoplasm. It carries out the reaction Endonucleolytic cleavage to 5'-phosphomonoester.. In terms of biological role, endonuclease that specifically degrades the RNA of RNA-DNA hybrids. The protein is Ribonuclease HII of Staphylococcus epidermidis (strain ATCC 12228 / FDA PCI 1200).